Consider the following 877-residue polypeptide: TSET complex member tstB (877 aa).

2 disordered regions span residues 398 to 437 (HLHHYHQGGSGTVGGSVPSSSSSSSSSSNITTSALSSGSS) and 522 to 557 (TGLPNPISNNNNSSNNTKDQSTTTTTSTTSSSSNSI). Low complexity-rich tracts occupy residues 412–437 (GSVPSSSSSSSSSSNITTSALSSGSS) and 529–556 (SNNNNSSNNTKDQSTTTTTSTTSSSSNS).

Component of the TSET complex, a heterohexamer composed of tstA, tstB, tstC, tstD, tstE and tstF, which may act in plasma membrane turnover. tstA, tstB, tstC and tstD are likely to be the core complex members with tstE and tstF acting as associated scaffold proteins.

The polypeptide is TSET complex member tstB (Dictyostelium discoideum (Social amoeba)).